The chain runs to 185 residues: ATP synthase subunit b, chloroplastic (185 aa).

Residues 31–49 form a helical membrane-spanning segment; it reads LINSGVVLGLPVYSGKGVL.

It belongs to the ATPase B chain family. In terms of assembly, F-type ATPases have 2 components, F(1) - the catalytic core - and F(0) - the membrane proton channel. F(1) has five subunits: alpha(3), beta(3), gamma(1), delta(1), epsilon(1). F(0) has four main subunits: a(1), b(1), b'(1) and c(10-14). The alpha and beta chains form an alternating ring which encloses part of the gamma chain. F(1) is attached to F(0) by a central stalk formed by the gamma and epsilon chains, while a peripheral stalk is formed by the delta, b and b' chains.

The protein resides in the plastid. The protein localises to the chloroplast thylakoid membrane. Functionally, f(1)F(0) ATP synthase produces ATP from ADP in the presence of a proton or sodium gradient. F-type ATPases consist of two structural domains, F(1) containing the extramembraneous catalytic core and F(0) containing the membrane proton channel, linked together by a central stalk and a peripheral stalk. During catalysis, ATP synthesis in the catalytic domain of F(1) is coupled via a rotary mechanism of the central stalk subunits to proton translocation. In terms of biological role, component of the F(0) channel, it forms part of the peripheral stalk, linking F(1) to F(0). The protein is ATP synthase subunit b, chloroplastic of Huperzia lucidula (Shining clubmoss).